The sequence spans 519 residues: MKIEELQGYLEKDGSRQRHFLFLYPLLFQEYIYTLAHDHGLNGSIFVEILDYDNKSSSVLVKHLITRMYQQNYLIYSADDSNQNRIVGHNNFFYSKMISEGFAVSMEIPFLLRLGSSLEEKEIPKSQNLRSIHSIFPFLEDKSSHLNYVSDILIPHPIHLEILVQILQCWTQDVSSLHLLRFFLHEYHNSNSFITPKKPVYVISISKENKRFFRFLYNSYVFECEFLLVFFHKQSSYLRSRSSGVFLERTHFYEKMGNFLVVCCNYFQKTQWFFKDPFLHYVRYQGKAILVSKGTHLLMRKWRSYLVHFWQYYFQFWSHPHRIHINQLSNYSFCFLGYLSNLLINLSVVRSQMLENSFVIDILTKKFDTRVSVIALIRSLSKAKFCTVSGHPISKSIWTNLSDLDIIHRFGWICRNLSHYHSGSSKKQSLYRIKYILRISCARTLARKHKSKVRAFLQRLGSGLLQEFFREEEEILSLIFPQALFRSHTGRIWYLDIICINDLRNLMIDHKIKPYNECK.

The protein belongs to the intron maturase 2 family. MatK subfamily.

Its subcellular location is the plastid. It localises to the chloroplast. In terms of biological role, usually encoded in the trnK tRNA gene intron. Probably assists in splicing its own and other chloroplast group II introns. This Dioscorea elephantipes (Elephant's foot yam) protein is Maturase K.